A 134-amino-acid chain; its full sequence is MKTMRMNSAFILAFALAAAMLILTEAANTAFVSSACNTQKIPSGSPFNRNLRAMLADLRQNTAFSGYDYKTSRAGSGGAPTAYGRATCKQSISQSDCTACLSNLVNRIFSICNNAIGARVQLVDCFIQYEQRSF.

The N-terminal stretch at methionine 1–alanine 26 is a signal peptide. In terms of domain architecture, Gnk2-homologous spans threonine 29–phenylalanine 134. Disulfide bonds link cysteine 36–cysteine 112, cysteine 88–cysteine 97, and cysteine 100–cysteine 125. Position 37 (asparagine 37) interacts with alpha-D-mannopyranose. Alpha-D-mannopyranose contacts are provided by arginine 119 and glutamate 130.

As to quaternary structure, binds actin in vitro.

The protein localises to the secreted. Functionally, possesses antifungal activity against F.oxysporum, T.reesei and C.albicans. Weakly inhibits the aspartic acid protease pepsin activity. Exerts antifungal activity against S.cerevisiae and F.culmorum through its carbohydrate-binding specificity. Acts as a lectin that stricly recognizes alpha-1,2-linked mannose moieties and interacts with the yeast cell wall mannan polysaccharide. Can interfere with the fungal actin remodeling resulting to the activation of an actin-dependent cell death. This chain is Antifungal protein ginkbilobin-2, found in Ginkgo biloba (Ginkgo).